The sequence spans 405 residues: Phosphatidylinositol 5-phosphate 4-kinase type-2 alpha (405 aa).

The 373-residue stretch at A32–L404 folds into the PIPK domain. The disordered stretch occupies residues Q287–L326. Over residues E288 to S303 the composition is skewed to acidic residues.

Homodimer. In terms of processing, phosphorylated in tyrosines. Phosphorylation is induced by light and increases kinase activity.

Its subcellular location is the cell membrane. It is found in the nucleus. The protein resides in the lysosome. It localises to the cytoplasm. It catalyses the reaction a 1,2-diacyl-sn-glycero-3-phospho-(1D-myo-inositol-5-phosphate) + ATP = a 1,2-diacyl-sn-glycero-3-phospho-(1D-myo-inositol-4,5-bisphosphate) + ADP + H(+). The enzyme catalyses 1,2-dihexadecanoyl-sn-glycero-3-phospho-(1D-myo-inositol-5-phosphate) + ATP = 1,2-dihexadecanoyl-sn-glycero-3-phospho-(1D-myo-inositol-4,5-bisphosphate) + ADP + H(+). It carries out the reaction 1,2-dihexadecanoyl-sn-glycero-3-phospho-(1D-myo-inositol-5-phosphate) + GTP = 1,2-dihexadecanoyl-sn-glycero-3-phospho-(1D-myo-inositol-4,5-bisphosphate) + GDP + H(+). With respect to regulation, in rod outer segments, activated by light. Catalyzes the phosphorylation of phosphatidylinositol 5-phosphate (PtdIns5P) on the fourth hydroxyl of the myo-inositol ring, to form phosphatidylinositol 4,5-bisphosphate (PtdIns(4,5)P2). Has both ATP- and GTP-dependent kinase activities. The protein is Phosphatidylinositol 5-phosphate 4-kinase type-2 alpha (PIP4K2A) of Gallus gallus (Chicken).